A 153-amino-acid polypeptide reads, in one-letter code: Putative pre-16S rRNA nuclease (153 aa).

Belongs to the YqgF nuclease family.

The protein localises to the cytoplasm. Its function is as follows. Could be a nuclease involved in processing of the 5'-end of pre-16S rRNA. The chain is Putative pre-16S rRNA nuclease from Prochlorococcus marinus (strain MIT 9215).